The following is a 332-amino-acid chain: Mitoferrin-1 (332 aa).

Solcar repeat units lie at residues 31–119 (ASLG…IKRS), 129–213 (NSHI…MQEH), and 220–314 (YRPE…FKYF). The next 6 membrane-spanning stretches (helical) occupy residues 33–52 (LGTH…TVMY), 94–113 (GLNI…FACY), 131–150 (HIAN…AVMN), 188–207 (SYST…FITY), 222–241 (PETH…AVTT), and 289–308 (GIQA…WSVY).

Belongs to the mitochondrial carrier (TC 2.A.29) family. As to expression, highly expressed in hematopoietic organs, Expressed in the intermediate cell mass (ICM), a tissue equivalent to the mammalian extraembryonic yolk-sac blood islands. Colocalizes with gata1.

Its subcellular location is the mitochondrion inner membrane. The catalysed reaction is Fe(2+)(in) = Fe(2+)(out). Its function is as follows. Mitochondrial iron transporter that specifically mediates iron uptake in developing erythroid cells, thereby playing an essential role in heme biosynthesis. This chain is Mitoferrin-1 (slc25a37), found in Danio rerio (Zebrafish).